Consider the following 139-residue polypeptide: uncharacterized protein (139 aa).

A helical transmembrane segment spans residues 43-59; sequence FGVISTLIAIFIGAFWL.

The protein resides in the membrane. This is an uncharacterized protein from Haemophilus influenzae (strain ATCC 51907 / DSM 11121 / KW20 / Rd).